Here is a 1008-residue protein sequence, read N- to C-terminus: Phytosulfokine receptor 1 (1008 aa).

The N-terminal stretch at 1-25 is a signal peptide; the sequence is MRVHRFCVIVIFLTELLCFFYSSES. N-linked (GlcNAc...) asparagine glycans are attached at residues Asn-55, Asn-64, and Asn-73. 12 LRR repeats span residues 75–98, 99–123, 124–148, 150–170, 172–194, 195–219, 221–243, 244–266, 291–315, 316–339, 341–362, and 363–387; these read TGRV…SLGK, LDEI…IFNL, KNLQ…NLPA, QSFD…ICHN, TQIR…GFGK, CVLL…LFHL, RLNL…IRNL, SSLV…VFDE, SPSL…CTAM, IALN…LPDC, RLKN…SFKN, and FESL…GILQ. Asn-106 carries an N-linked (GlcNAc...) asparagine glycan. N-linked (GlcNAc...) asparagine glycans are attached at residues Asn-160, Asn-170, and Asn-187. Asn-242 carries an N-linked (GlcNAc...) asparagine glycan. Arg-300 contributes to the phytosulfokine binding site. Asn-301 and Asn-311 each carry an N-linked (GlcNAc...) asparagine glycan. Residues Asn-346, Ser-370, and Ser-372 each contribute to the phytosulfokine site. Asn-373, Asn-378, and Asn-391 each carry an N-linked (GlcNAc...) asparagine glycan. LRR repeat units follow at residues 392–414, 415–438, 439–464, and 466–486; these read LTTL…SLHF, EKLK…LSSS, NELQ…DFKA, and FYLD…LTKL. Phytosulfokine-binding residues include Thr-398, Asn-424, and Asp-445. Residues Asn-472 and Asn-493 are each glycosylated (N-linked (GlcNAc...) asparagine). Residue Lys-508 coordinates phytosulfokine. Asn-510 and Asn-534 each carry an N-linked (GlcNAc...) asparagine glycan. LRR repeat units follow at residues 521-545, 546-570, 571-594, and 596-619; these read IFGF…EFGN, LKKL…LSGM, TSLE…LQQL, and FLSK…QFQT. Residues Asn-606 and Asn-622 are each glycosylated (N-linked (GlcNAc...) asparagine). The chain crosses the membrane as a helical span at residues 660 to 680; that stretch reads MAIGIAFGSVFLLTLLSLIVL. Thr-731 carries the phosphothreonine modification. Positions 734 to 1005 constitute a Protein kinase domain; it reads FDQANIIGCG…PTTQQLVSWL (272 aa). ATP-binding positions include 740–748 and Lys-762; that span reads IGCGGFGMV. Residues Tyr-807 and Tyr-847 each carry the phosphotyrosine modification. Asp-860 (proton acceptor) is an active-site residue. Tyr-902 carries the post-translational modification Phosphotyrosine.

This sequence belongs to the protein kinase superfamily. Ser/Thr protein kinase family. In terms of assembly, homo- and heterodimers with PSY1R. Heterodimers with the somatic embryogenesis receptor-like kinases (SERKs). PSK is not directly involved in PSKR-SERK interaction but stabilizes PSKR island domain for recruitment of a SERK. Part of a functional complex containing PSKR1, BAK1, CNGC17, and AHA. Interacts with AHA1, AHA2, and BAK1, but not with CNGC17 or BRI1. Mg(2+) is required as a cofactor. The cofactor is Mn(2+). In terms of tissue distribution, weakly expressed in roots, leaves, stems and flowers. Expressed in the primary and lateral roots, including root primordia and root tips, but not in the hypocotyl.

The protein localises to the cell membrane. It catalyses the reaction L-seryl-[protein] + ATP = O-phospho-L-seryl-[protein] + ADP + H(+). The enzyme catalyses L-threonyl-[protein] + ATP = O-phospho-L-threonyl-[protein] + ADP + H(+). It carries out the reaction GTP = 3',5'-cyclic GMP + diphosphate. Its activity is regulated as follows. cGMP suppresses kinase activity. Phytosulfokine receptor with both a serine/threonine-protein kinase activity and a guanylate cyclase activity. Regulates, in response to phytosulfokine binding, a signaling cascade involved in plant cell differentiation, organogenesis, somatic embryogenesis, cellular proliferation and plant growth. Involved in plant immunity, with antagonistic effects on bacterial and fungal resistances. Not involved in PSY perception. CNGC17 and AHAs form a functional cation-translocating unit that is activated by PSKR1/BAK1 and possibly other BAK1/RLK complexes. The sequence is that of Phytosulfokine receptor 1 from Arabidopsis thaliana (Mouse-ear cress).